The primary structure comprises 296 residues: Mycothiol acetyltransferase (296 aa).

N-acetyltransferase domains lie at 8–146 (RSPE…PPVE) and 151–296 (ISVR…GPPV). E39 contributes to the 1D-myo-inositol 2-(L-cysteinylamino)-2-deoxy-alpha-D-glucopyranoside binding site. 76 to 78 (VVT) is an acetyl-CoA binding site. E178, K220, and E228 together coordinate 1D-myo-inositol 2-(L-cysteinylamino)-2-deoxy-alpha-D-glucopyranoside. Residues 232 to 234 (VGV) and 239 to 245 (QGEGLGR) each bind acetyl-CoA. Y266 serves as a coordination point for 1D-myo-inositol 2-(L-cysteinylamino)-2-deoxy-alpha-D-glucopyranoside.

The protein belongs to the acetyltransferase family. MshD subfamily. In terms of assembly, monomer.

The catalysed reaction is 1D-myo-inositol 2-(L-cysteinylamino)-2-deoxy-alpha-D-glucopyranoside + acetyl-CoA = mycothiol + CoA + H(+). Its function is as follows. Catalyzes the transfer of acetyl from acetyl-CoA to desacetylmycothiol (Cys-GlcN-Ins) to form mycothiol. The polypeptide is Mycothiol acetyltransferase (Kytococcus sedentarius (strain ATCC 14392 / DSM 20547 / JCM 11482 / CCUG 33030 / NBRC 15357 / NCTC 11040 / CCM 314 / 541) (Micrococcus sedentarius)).